A 365-amino-acid chain; its full sequence is G-protein coupled receptor 68 (365 aa).

Residues 1 to 12 (MGNITADNSSMS) lie on the Extracellular side of the membrane. Asn3 and Asn8 each carry an N-linked (GlcNAc...) asparagine glycan. Residues 13-49 (CTIDHTIHQTLAPVVYVTVLVVGFPANCLSLYFGYLQ) form a helical membrane-spanning segment. Disulfide bonds link Cys13/Cys258 and Cys94/Cys172. Over 50-53 (IKAR) the chain is Cytoplasmic. Residues 54–84 (NELGVYLCNLTVADLFYICSLPFWLQYVLQH) form a helical membrane-spanning segment. Residues 85-89 (DNWSH) are Extracellular-facing. The helical transmembrane segment at 90–125 (GDLSCQVCGILLYENIYISVGFLCCISVDRYLAVAH) threads the bilayer. Over 126 to 133 (PFRFHQFR) the chain is Cytoplasmic. Residues 134 to 160 (TLKAAVGVSVVIWAKELLTSIYFLMHE) traverse the membrane as a helical segment. The Extracellular portion of the chain corresponds to 161-176 (EVIEDENQHRVCFEHY). Positions 161–176 (EVIEDENQHRVCFEHY) are extracellular loop 2 (ECL2). A helical transmembrane segment spans residues 177–214 (PIQAWQRAINYYRFLVGFLFPICLLLASYQGILRAVRR). At 215–218 (SHGT) the chain is on the cytoplasmic side. Residues 219 to 254 (QKSRKDQIQRLVLSTVVIFLACFLPYHVLLLVRSVW) traverse the membrane as a helical segment. Residues 255–260 (EASCDF) are Extracellular-facing. The chain crosses the membrane as a helical span at residues 261–289 (AKGVFNAYHFSLLLTSFNCVADPVLYCFV). At 290-365 (SETTHRDLAR…SGGFPTGRLA (76 aa)) the chain is on the cytoplasmic side. The tract at residues 345–365 (HPAFQTPNSPGSGGFPTGRLA) is disordered. Positions 355-365 (GSGGFPTGRLA) are enriched in gly residues.

The protein belongs to the G-protein coupled receptor 1 family. Found at low level in a wide range of tissues, but significantly expressed in lung, kidney, bone and nervous system.

Its subcellular location is the cell membrane. Its activity is regulated as follows. Activated by a network of residues that connects an extracellular-facing cavity to Glu-149, a conserved charged residue buried in the transmembrane core of the receptor. Protonation likely drives conformational changes in extracellular loop 2 (ECL2), which stabilizes movement of transmembrane 3 (TM3) and a series of rearrangements that connect the extracellular-facing cavity to Glu-149, a residue only conserved in proton-sensing G-protein coupled receptors. Activated in an allosteric manner by divalent metal ions at the extracellular surface following the order: Cd(2+) &gt; Co(2+) &gt; Ni(2+) &gt; Zn(2+) &gt; Fe(2+) &gt; Ca(2+) &gt; Mg(2+). Activated by the benzodiazepine drug lorazepam, a non-selective GPR68 positive allosteric modulator. Activated by ogerin (ZINC67740571), a selective GPR68 positive allosteric modulator. Activated by small molecule MS48107, a selective positive allosteric modulator. Inhibited by small molecule ogremorphin, inducing ferroptosis in cancer cells. Its function is as follows. Proton-sensing G-protein coupled receptor activated by extracellular pH, which is required to monitor pH changes and generate adaptive reactions. The receptor is almost silent at pH 7.8 but fully activated at pH 6.8. Ligand binding causes a conformation change that triggers signaling via guanine nucleotide-binding proteins (G proteins) and modulates the activity of downstream effectors, such as phospholipase C. GPR68 is mainly coupled to G(q) G proteins and mediates production of diacylglycerol (DAG) and inositol 1,4,5-trisphosphate (IP3). Acts as a key mechanosensor of fluid shear stress and membrane stretch. Expressed in endothelial cells of small-diameter resistance arteries, where it mediates flow-induced dilation in response to shear stress. May represents an osteoblastic pH sensor regulating cell-mediated responses to acidosis in bone. Acts as a regulator of calcium-sensing receptor CASR in a seesaw manner: GPR68-mediated signaling inhibits CASR signaling in response to protons, while CASR inhibits GPR68 in presence of extracellular calcium. The polypeptide is G-protein coupled receptor 68 (Homo sapiens (Human)).